We begin with the raw amino-acid sequence, 630 residues long: Biosynthetic arginine decarboxylase (630 aa).

Lysine 99 bears the N6-(pyridoxal phosphate)lysine mark. Valine 281–tyrosine 291 is a substrate binding site.

Belongs to the Orn/Lys/Arg decarboxylase class-II family. SpeA subfamily. The cofactor is Mg(2+). Pyridoxal 5'-phosphate serves as cofactor.

It carries out the reaction L-arginine + H(+) = agmatine + CO2. Its pathway is amine and polyamine biosynthesis; agmatine biosynthesis; agmatine from L-arginine: step 1/1. Catalyzes the biosynthesis of agmatine from arginine. The protein is Biosynthetic arginine decarboxylase of Bacteroides fragilis (strain ATCC 25285 / DSM 2151 / CCUG 4856 / JCM 11019 / LMG 10263 / NCTC 9343 / Onslow / VPI 2553 / EN-2).